The chain runs to 103 residues: Large ribosomal subunit protein uL24 (103 aa).

It belongs to the universal ribosomal protein uL24 family. In terms of assembly, part of the 50S ribosomal subunit.

Functionally, one of two assembly initiator proteins, it binds directly to the 5'-end of the 23S rRNA, where it nucleates assembly of the 50S subunit. In terms of biological role, one of the proteins that surrounds the polypeptide exit tunnel on the outside of the subunit. This chain is Large ribosomal subunit protein uL24, found in Pasteurella multocida (strain Pm70).